Consider the following 740-residue polypeptide: D-ornithine 4,5-aminomutase subunit beta (740 aa).

Substrate contacts are provided by residues glutamate 81, tyrosine 160, histidine 182, and 294 to 296; that span reads RAQ. Residues 602–739 enclose the B12-binding domain; the sequence is PLKIVAATVG…VKKRREMREG (138 aa). Residues 614–616 and histidine 615 each bind adenosylcob(III)alamin; that span reads EHS. An N6-(pyridoxal phosphate)lysine modification is found at lysine 626. Adenosylcob(III)alamin-binding positions include 664 to 669, threonine 700, and serine 720; that span reads STIISH.

Heterotetramer of 2 alpha (OraS) and 2 beta (OraE) subunits. Requires adenosylcob(III)alamin as cofactor. Pyridoxal 5'-phosphate serves as cofactor.

The enzyme catalyses D-ornithine = (2R,4S)-2,4-diaminopentanoate. Increased activity in the presence of dithiothreitol (DTT) in vitro. Inhibited by 1 mM potassium phosphate and potassium chloride. Inhibited by L-alpha-ornithine, D,L-alpha-lysine, L-beta-lysine (50%-60%), L-alpha-lysine (26%) and by delta-amino-n-valeric acid to a lesser extent. Significant decrease in activity is observed in the presence of 0.2 mM p-chloromercuribenzoate, N-ethylmaleimide and also by 2 mM iodoacetate to a lesser extent but not inhibited by arsenite. In terms of biological role, component of a complex that catalyzes the reversible migration of the omega amino group of D-ornithine to C-4 to form (2R,4S)-2,4-diaminopentanoic acid. OraE may be the catalytic subunit. Active only on D-ornithine and 2,4-diaminopentanoic acid but not active on L-ornithine, L-beta-lysine, L-alpha-lysine or D-alpha-lysine. The chain is D-ornithine 4,5-aminomutase subunit beta (oraE) from Acetoanaerobium sticklandii (strain ATCC 12662 / DSM 519 / JCM 1433 / CCUG 9281 / NCIMB 10654 / HF) (Clostridium sticklandii).